Consider the following 313-residue polypeptide: GTPase Era (313 aa).

Residues 13-186 (RSGFVSFVGR…ADLLVGLLPE (174 aa)) form the Era-type G domain. The segment at 21–28 (GRPNAGKS) is G1. A GTP-binding site is contributed by 21–28 (GRPNAGKS). A G2 region spans residues 47 to 51 (QTTRT). A G3 region spans residues 68–71 (DTPG). Residues 68-72 (DTPGL) and 131-134 (TKTD) each bind GTP. A G4 region spans residues 131-134 (TKTD). The interval 165 to 167 (VSA) is G5. The 83-residue stretch at 217–299 (LRDELPHSVA…YLDLHVKIAK (83 aa)) folds into the KH type-2 domain.

The protein belongs to the TRAFAC class TrmE-Era-EngA-EngB-Septin-like GTPase superfamily. Era GTPase family. In terms of assembly, monomer.

The protein resides in the cytoplasm. The protein localises to the cell membrane. In terms of biological role, an essential GTPase that binds both GDP and GTP, with rapid nucleotide exchange. Plays a role in 16S rRNA processing and 30S ribosomal subunit biogenesis and possibly also in cell cycle regulation and energy metabolism. The chain is GTPase Era from Nocardioides sp. (strain ATCC BAA-499 / JS614).